Here is a 97-residue protein sequence, read N- to C-terminus: Secreted transmembrane peptide 4 (97 aa).

The first 33 residues, 1–33 (MTKNMTKKKMGLMSPNIAAFVLPMLLVLFTISS), serve as a signal peptide directing secretion. The SCOOP motif signature appears at 54-67 (IVFTPPSSSCGGSP). The SxS motif essential for MIK2 binding signature appears at 60–62 (SSS). A disordered region spans residues 75 to 97 (WMPRRPCRRTRPPGTNIPVSQSP).

The protein belongs to the serine rich endogenous peptide (SCOOP) phytocytokine family. Interacts with MIK2 (via extracellular leucine-rich repeat domain); this interaction triggers the formation of complex between MIK2 and the BAK1/SERK3 and SERK4 coreceptors, and subsequent BAK1 activation by phosphorylation. Mostly expressed in leaves and stems, and, to a lower extent, in roots, siliques, seeds and flowers.

The protein resides in the cell membrane. The protein localises to the secreted. It is found in the extracellular space. Its subcellular location is the apoplast. Brassicaceae-specific phytocytokine (plant endogenous peptide released into the apoplast) perceived by MIK2 in a BAK1/SERK3 and SERK4 coreceptors-dependent manner, that modulates various physiological and antimicrobial processes including growth prevention and reactive oxygen species (ROS) response regulation. Prevents general growth and development. This chain is Secreted transmembrane peptide 4, found in Arabidopsis thaliana (Mouse-ear cress).